The following is a 100-amino-acid chain: Urease subunit gamma (100 aa).

It belongs to the urease gamma subunit family. Heterotrimer of UreA (gamma), UreB (beta) and UreC (alpha) subunits. Three heterotrimers associate to form the active enzyme.

The protein localises to the cytoplasm. It catalyses the reaction urea + 2 H2O + H(+) = hydrogencarbonate + 2 NH4(+). It participates in nitrogen metabolism; urea degradation; CO(2) and NH(3) from urea (urease route): step 1/1. The polypeptide is Urease subunit gamma (Klebsiella pneumoniae).